The primary structure comprises 561 residues: Potassium-transporting ATPase potassium-binding subunit (561 aa).

10 helical membrane passes run 4–24 (IIMQDVFFIVLLLVLAIPLGI), 65–85 (AGSVLAFSAIGFVFVMAVLML), 134–154 (GLTVQNFVSAATGIAVLFAVI), 177–197 (LYILLPLSLVLAILLVSQGVV), 253–273 (FTNLIEMLAILLIPVALVVMF), 285–305 (AIMTAMMIVFVVGIVAITISE), 380–400 (GLYGMIGFIILTVFIAGLLVG), 417–437 (MVCLLILVPPLLTLFGTAFAV), 484–504 (MVGALMMLFARFIPLIAALYL), and 528–548 (FIGLLIGVVVLVGALSFLPAL).

It belongs to the KdpA family. In terms of assembly, the system is composed of three essential subunits: KdpA, KdpB and KdpC.

The protein resides in the cell membrane. Its function is as follows. Part of the high-affinity ATP-driven potassium transport (or Kdp) system, which catalyzes the hydrolysis of ATP coupled with the electrogenic transport of potassium into the cytoplasm. This subunit binds the extracellular potassium ions and delivers the ions to the membrane domain of KdpB through an intramembrane tunnel. This Listeria welshimeri serovar 6b (strain ATCC 35897 / DSM 20650 / CCUG 15529 / CIP 8149 / NCTC 11857 / SLCC 5334 / V8) protein is Potassium-transporting ATPase potassium-binding subunit.